The chain runs to 260 residues: tRNA (guanine-N(7)-)-methyltransferase (260 aa).

The segment at 1 to 37 is disordered; the sequence is MIHDPNDAGLPDQLPTPSSEAENSPAGDTTPPEEALH. S-adenosyl-L-methionine-binding residues include Glu90, Glu115, Asp142, and Asp165. The active site involves Asp165. Residues Lys169, Asp201, and 236–239 each bind substrate; that span reads TKFE.

Belongs to the class I-like SAM-binding methyltransferase superfamily. TrmB family.

It catalyses the reaction guanosine(46) in tRNA + S-adenosyl-L-methionine = N(7)-methylguanosine(46) in tRNA + S-adenosyl-L-homocysteine. Its pathway is tRNA modification; N(7)-methylguanine-tRNA biosynthesis. In terms of biological role, catalyzes the formation of N(7)-methylguanine at position 46 (m7G46) in tRNA. The protein is tRNA (guanine-N(7)-)-methyltransferase of Paraburkholderia xenovorans (strain LB400).